The chain runs to 488 residues: Aspartyl/glutamyl-tRNA(Asn/Gln) amidotransferase subunit B (488 aa).

The protein belongs to the GatB/GatE family. GatB subfamily. As to quaternary structure, heterotrimer of A, B and C subunits.

It catalyses the reaction L-glutamyl-tRNA(Gln) + L-glutamine + ATP + H2O = L-glutaminyl-tRNA(Gln) + L-glutamate + ADP + phosphate + H(+). It carries out the reaction L-aspartyl-tRNA(Asn) + L-glutamine + ATP + H2O = L-asparaginyl-tRNA(Asn) + L-glutamate + ADP + phosphate + 2 H(+). Its function is as follows. Allows the formation of correctly charged Asn-tRNA(Asn) or Gln-tRNA(Gln) through the transamidation of misacylated Asp-tRNA(Asn) or Glu-tRNA(Gln) in organisms which lack either or both of asparaginyl-tRNA or glutaminyl-tRNA synthetases. The reaction takes place in the presence of glutamine and ATP through an activated phospho-Asp-tRNA(Asn) or phospho-Glu-tRNA(Gln). In Chlamydia trachomatis serovar A (strain ATCC VR-571B / DSM 19440 / HAR-13), this protein is Aspartyl/glutamyl-tRNA(Asn/Gln) amidotransferase subunit B.